We begin with the raw amino-acid sequence, 42 residues long: Photosystem II reaction center protein J (42 aa).

Residues 10–30 form a helical membrane-spanning segment; it reads IPLWLVGTVVGIAALTLLSVF.

This sequence belongs to the PsbJ family. PSII is composed of 1 copy each of membrane proteins PsbA, PsbB, PsbC, PsbD, PsbE, PsbF, PsbH, PsbI, PsbJ, PsbK, PsbL, PsbM, PsbT, PsbX, PsbY, PsbZ, Psb30/Ycf12, at least 3 peripheral proteins of the oxygen-evolving complex and a large number of cofactors. It forms dimeric complexes.

The protein localises to the plastid. Its subcellular location is the chloroplast thylakoid membrane. One of the components of the core complex of photosystem II (PSII). PSII is a light-driven water:plastoquinone oxidoreductase that uses light energy to abstract electrons from H(2)O, generating O(2) and a proton gradient subsequently used for ATP formation. It consists of a core antenna complex that captures photons, and an electron transfer chain that converts photonic excitation into a charge separation. In Tupiella akineta (Green alga), this protein is Photosystem II reaction center protein J.